The primary structure comprises 130 residues: Small ribosomal subunit protein uS8 (130 aa).

The protein belongs to the universal ribosomal protein uS8 family. Part of the 30S ribosomal subunit. Contacts proteins S5 and S12.

Its function is as follows. One of the primary rRNA binding proteins, it binds directly to 16S rRNA central domain where it helps coordinate assembly of the platform of the 30S subunit. In Shewanella loihica (strain ATCC BAA-1088 / PV-4), this protein is Small ribosomal subunit protein uS8.